We begin with the raw amino-acid sequence, 1290 residues long: Vacuolating cytotoxin autotransporter (1290 aa).

The first 33 residues, 1–33 (MEIQQTHRKINRPLVSLALVGALVSITPQQSHA), serve as a signal peptide directing secretion. Residues 326-374 (PPEGGYKDKPKDKPSNTTQNNANNNQQNSAQNNSNTQVINPPNSAQKTE) are disordered. Residues 330–339 (GYKDKPKDKP) show a composition bias toward basic and acidic residues. A compositionally biased stretch (low complexity) spans 340 to 362 (SNTTQNNANNNQQNSAQNNSNTQ). Residues 363 to 374 (VINPPNSAQKTE) show a composition bias toward polar residues. Positions 1018–1290 (KYEKPTNVWA…ASNLGMRYSF (273 aa)) constitute an Autotransporter domain.

The protein localises to the periplasm. Its subcellular location is the secreted. It localises to the cell surface. The protein resides in the cell outer membrane. Functionally, induces vacuolation of eukaryotic cells. Causes ulceration and gastric lesions. This Helicobacter pylori (strain ATCC 700392 / 26695) (Campylobacter pylori) protein is Vacuolating cytotoxin autotransporter (vacA).